A 314-amino-acid chain; its full sequence is Oxaloacetate tautomerase FAHD2A, mitochondrial (314 aa).

The transit peptide at 1–84 (MLGSSGRRLL…ATLSVVRRAL (84 aa)) directs the protein to the mitochondrion. 3 residues coordinate Mg(2+): E159, E161, and D190.

This sequence belongs to the FAH family. Requires Mg(2+) as cofactor. It depends on Mn(2+) as a cofactor.

The protein localises to the mitochondrion. It carries out the reaction oxaloacetate = enol-oxaloacetate. Its function is as follows. Tautomerase that converts enol-oxaloacetate, a strong inhibitor of succinate dehydrogenase, to the physiological keto form of oxaloacetate. It is thereby required to maximize aerobic respiration efficiency by preventing succinate dehydrogenase inhibition. This Bos taurus (Bovine) protein is Oxaloacetate tautomerase FAHD2A, mitochondrial.